The following is a 231-amino-acid chain: Aquaporin Z (231 aa).

2 helical membrane passes run 9–29 (CFGTFWLVFGGCGSAVLAAGF) and 34–54 (IGFAGVALAFGLTVLTMAFAV). Residues 63-65 (NPA) carry the NPA 1 motif. The next 3 helical transmembrane spans lie at 82–102 (VGYVIAQVVGGIVAAALLYLI), 129–149 (YSMLSALVVELVLSAGFLLVI), and 156–176 (FAPAGFAPIAIGLALTLIHLI). Positions 186 to 188 (NPA) match the NPA 2 motif. A helical membrane pass occupies residues 202 to 222 (LEQLWFFWVVPIVGGIIGGLI).

Belongs to the MIP/aquaporin (TC 1.A.8) family. As to quaternary structure, homotetramer.

Its subcellular location is the cell inner membrane. It catalyses the reaction H2O(in) = H2O(out). Functionally, channel that permits osmotically driven movement of water in both directions. It is involved in the osmoregulation and in the maintenance of cell turgor during volume expansion in rapidly growing cells. It mediates rapid entry or exit of water in response to abrupt changes in osmolarity. The polypeptide is Aquaporin Z (Escherichia coli O157:H7).